Reading from the N-terminus, the 262-residue chain is Probable carboxylesterase Culp3 (262 aa).

The signal sequence occupies residues 1–41; the sequence is MNNRPIRLLTSGRAGLGAGALITAVVLLIALGAVWTPVAFA. Residues Cys44 and Cys114 are joined by a disulfide bond. Ser125 (nucleophile) is an active-site residue. Cys188 and Cys195 are disulfide-bonded. The active site involves Asp192. The active-site Proton donor/acceptor is His206. Positions 241–262 are disordered; it reads LPGSVLQMPGTAAPAPESLHGR.

The protein belongs to the cutinase family.

It localises to the secreted. Shows weak esterase activity with the p-nitrophenol-linked aliphatic ester pNP-butyrate. Does not exhibit cutinase activity. The polypeptide is Probable carboxylesterase Culp3 (cut3) (Mycobacterium tuberculosis (strain ATCC 25618 / H37Rv)).